Here is a 355-residue protein sequence, read N- to C-terminus: 3-isopropylmalate dehydrogenase (355 aa).

Substrate is bound by residues Arg90, Arg100, Arg128, and Asp222. Positions 222, 246, and 250 each coordinate Mg(2+). An NAD(+)-binding site is contributed by 280–292 (GSAPDIAGKGIAN).

Belongs to the isocitrate and isopropylmalate dehydrogenases family. LeuB type 1 subfamily. In terms of assembly, homodimer. The cofactor is Mg(2+). It depends on Mn(2+) as a cofactor.

The protein resides in the cytoplasm. The enzyme catalyses (2R,3S)-3-isopropylmalate + NAD(+) = 4-methyl-2-oxopentanoate + CO2 + NADH. It functions in the pathway amino-acid biosynthesis; L-leucine biosynthesis; L-leucine from 3-methyl-2-oxobutanoate: step 3/4. Functionally, catalyzes the oxidation of 3-carboxy-2-hydroxy-4-methylpentanoate (3-isopropylmalate) to 3-carboxy-4-methyl-2-oxopentanoate. The product decarboxylates to 4-methyl-2 oxopentanoate. This is 3-isopropylmalate dehydrogenase from Burkholderia thailandensis (strain ATCC 700388 / DSM 13276 / CCUG 48851 / CIP 106301 / E264).